A 505-amino-acid chain; its full sequence is One cut domain family member 2 (505 aa).

Disordered stretches follow at residues 29 to 94 (LGTL…GTAA), 165 to 190 (KFHH…RLSG), and 275 to 333 (EQHL…QLEE). Residues 35–56 (PVGGGSGGGGGGGGGGGGGGPG) are compositionally biased toward gly residues. The segment covering 167–187 (HHPHPHHHPHHHHHHHHHHQR) has biased composition (basic residues). The CUT DNA-binding region spans 325–411 (VATSGQLEEI…QRMSALRLAA (87 aa)). The segment at residues 427–486 (QKKSRLVFTDLQRRTLFAIFKENKRPSKEMQITISQQLGLELTTVSNFFMNARRRSLEKW) is a DNA-binding region (homeobox).

Belongs to the CUT homeobox family.

Its subcellular location is the nucleus. Its function is as follows. Transcriptional activator. Activates the transcription of a number of liver genes such as HNF3B. The chain is One cut domain family member 2 (Onecut2) from Mus musculus (Mouse).